A 388-amino-acid polypeptide reads, in one-letter code: P2X purinoceptor 4 (388 aa).

The Cytoplasmic segment spans residues 1 to 33 (MAGCCSVLGSFLFEYDTPRIVLIRSRKVGLMNR). Residues 34–54 (VVQLLILAYVIGWVFVWEKGY) form a helical membrane-spanning segment. Residues 55-338 (QETDSVVSSV…KFDIIPTMIN (284 aa)) are Extracellular-facing. Lysine 67 and lysine 69 together coordinate ATP. Lysine 67 and lysine 69 together coordinate CTP. Residues asparagine 75, asparagine 110, asparagine 131, asparagine 153, and asparagine 184 are each glycosylated (N-linked (GlcNAc...) asparagine). 3 disulfide bridges follow: cysteine 116–cysteine 165, cysteine 126–cysteine 149, and cysteine 132–cysteine 159. Positions 186 and 188 each coordinate ATP. Threonine 186 provides a ligand contact to CTP. Asparagine 199 and asparagine 208 each carry an N-linked (GlcNAc...) asparagine glycan. 2 disulfides stabilise this stretch: cysteine 217–cysteine 227 and cysteine 261–cysteine 270. Residues asparagine 293, arginine 295, and lysine 313 each contribute to the ATP site. CTP-binding residues include asparagine 293, arginine 295, and lysine 313. The helical transmembrane segment at 339–359 (VGSGLALLGVATVLCDVIVLY) threads the bilayer. At 360–388 (CMKKRYYYRDKKYKYVEDYEQGLSGEMNQ) the chain is on the cytoplasmic side.

This sequence belongs to the P2X receptor family. In terms of assembly, functional P2RXs are organized as homomeric and heteromeric trimers. Functional P2XRs are organized as homomeric and heteromeric trimers. Forms heterotrimer with P2RX1. Interacts with P2RX7 (via C-terminus); this interaction is functional only in the presence of ATP. Forms heterotrimer with P2RX4; functional differences between homomeric P2RX4 and P2RX4/6 heterotrimer are minor. Interacts with AP1M2.

It localises to the cell membrane. The protein localises to the lysosome membrane. The enzyme catalyses K(+)(in) = K(+)(out). It carries out the reaction Na(+)(in) = Na(+)(out). The catalysed reaction is Ca(2+)(in) = Ca(2+)(out). Activated by ATP. pH-dependent and inhibited by acidic pH. Functionally, ATP-gated nonselective transmembrane cation channel permeable to potassium, sodium and calcium. CTP, but not GTP or UTP, functions as a weak affinity agonist for P2RX4. Activated by extracellularly released ATP, it plays multiple role in immunity and central nervous system physiology. Plays a key role in initial steps of T-cell activation and Ca(2+) microdomain formation. Also participates in basal T-cell activity without TCR/CD3 stimulation. Promotes the differentiation and activation of Th17 cells via expression of retinoic acid-related orphan receptor C/RORC. Upon activation, drives microglia motility via the PI3K/Akt pathway. Could also function as an ATP-gated cation channel of lysosomal membranes. This is P2X purinoceptor 4 (P2rx4) from Mus musculus (Mouse).